The following is a 117-amino-acid chain: Cytochrome c6 (117 aa).

The signal sequence occupies residues 1-24; the sequence is MKKLLAIALTVLATVFAFGTPAFA. The heme c site is built by C38, C41, H42, and M89.

The protein belongs to the cytochrome c family. PetJ subfamily. As to quaternary structure, monomer. Post-translationally, binds 1 heme c group covalently per subunit.

It localises to the cellular thylakoid lumen. In terms of biological role, functions as an electron carrier between membrane-bound cytochrome b6-f and photosystem I in oxygenic photosynthesis. This Picosynechococcus sp. (strain ATCC 27264 / PCC 7002 / PR-6) (Agmenellum quadruplicatum) protein is Cytochrome c6 (petJ).